The chain runs to 305 residues: Methionyl-tRNA formyltransferase (305 aa).

111–114 (SLLP) contributes to the (6S)-5,6,7,8-tetrahydrofolate binding site.

The protein belongs to the Fmt family.

It carries out the reaction L-methionyl-tRNA(fMet) + (6R)-10-formyltetrahydrofolate = N-formyl-L-methionyl-tRNA(fMet) + (6S)-5,6,7,8-tetrahydrofolate + H(+). Its function is as follows. Attaches a formyl group to the free amino group of methionyl-tRNA(fMet). The formyl group appears to play a dual role in the initiator identity of N-formylmethionyl-tRNA by promoting its recognition by IF2 and preventing the misappropriation of this tRNA by the elongation apparatus. This Campylobacter jejuni subsp. jejuni serotype O:6 (strain 81116 / NCTC 11828) protein is Methionyl-tRNA formyltransferase.